The primary structure comprises 480 residues: tRNA (uracil-5-)-methyltransferase homolog B (480 aa).

The S-adenosyl-L-methionine site is built by glutamine 299, glutamate 349, and asparagine 399. Cysteine 427 acts as the Nucleophile in catalysis. Catalysis depends on glutamate 473, which acts as the Proton acceptor.

This sequence belongs to the class I-like SAM-binding methyltransferase superfamily. RNA M5U methyltransferase family.

It is found in the mitochondrion. The enzyme catalyses uridine(54) in tRNA + S-adenosyl-L-methionine = 5-methyluridine(54) in tRNA + S-adenosyl-L-homocysteine + H(+). The catalysed reaction is a uridine in 12S rRNA + S-adenosyl-L-methionine = a 5-methyluridine in 12S rRNA + S-adenosyl-L-homocysteine + H(+). Functionally, mitochondrial S-adenosyl-L-methionine-dependent methyltransferase that catalyzes the formation of 5-methyl-uridine in tRNAs and 12S rRNA. Catalyzes the methylation of uridine at position 54 (m5U54) in all tRNAs. Specifically methylates the uridine in position 429 of 12S rRNA (m5U429). Does not affect RNA stability or mitochondrial translation. This is tRNA (uracil-5-)-methyltransferase homolog B (trmt2b) from Danio rerio (Zebrafish).